Reading from the N-terminus, the 181-residue chain is Oligoribonuclease (181 aa).

One can recognise an Exonuclease domain in the interval Leu-8–Leu-171. The active site involves Tyr-129.

The protein belongs to the oligoribonuclease family.

The protein resides in the cytoplasm. 3'-to-5' exoribonuclease specific for small oligoribonucleotides. The sequence is that of Oligoribonuclease from Serratia proteamaculans (strain 568).